Consider the following 202-residue polypeptide: Inner membrane-spanning protein YciB (202 aa).

The next 6 membrane-spanning stretches (helical) occupy residues 3-23, 46-66, 73-93, 100-120, 145-165, and 173-193; these read ILFD…AGGN, ILLA…WVWM, TMLW…LFFH, WKPT…AVIF, LAWA…AYNF, and FKLF…GFYL.

Belongs to the YciB family.

Its subcellular location is the cell inner membrane. Plays a role in cell envelope biogenesis, maintenance of cell envelope integrity and membrane homeostasis. The polypeptide is Inner membrane-spanning protein YciB (Aromatoleum aromaticum (strain DSM 19018 / LMG 30748 / EbN1) (Azoarcus sp. (strain EbN1))).